Here is a 365-residue protein sequence, read N- to C-terminus: Pituitary-specific positive transcription factor 1 (365 aa).

A 9aaTAD motif is present at residues 5–12; the sequence is AFSADSFT. Residues 160–191 are disordered; the sequence is PAVLSEEPPLGGTKDLRLRSRPPDDPPDMDSP. The segment covering 173–183 has biased composition (basic and acidic residues); it reads KDLRLRSRPPD. A POU-specific domain is found at 188–262; sequence MDSPQIRELE…ILAKWLDEAE (75 aa). Positions 278-337 form a DNA-binding region, homeobox; sequence KRKRRTTISLGAKEALERSFREKIKPSSQEIVRMAEGLHLEKEVVRVWFCNRRQREKRVK.

This sequence belongs to the POU transcription factor family. Class-1 subfamily.

It is found in the nucleus. In terms of biological role, transcription factor that activates growth hormone and prolactin genes. Specifically binds to the consensus sequence 5'-TAAAT-3'. This Oncorhynchus keta (Chum salmon) protein is Pituitary-specific positive transcription factor 1 (pou1f1).